Here is a 287-residue protein sequence, read N- to C-terminus: Probable endonuclease 4 (287 aa).

Zn(2+)-binding residues include His69, His109, Glu144, Asp178, His181, His215, Asp228, His230, and Glu260.

This sequence belongs to the AP endonuclease 2 family. The cofactor is Zn(2+).

The catalysed reaction is Endonucleolytic cleavage to 5'-phosphooligonucleotide end-products.. Functionally, endonuclease IV plays a role in DNA repair. It cleaves phosphodiester bonds at apurinic or apyrimidinic (AP) sites, generating a 3'-hydroxyl group and a 5'-terminal sugar phosphate. The chain is Probable endonuclease 4 from Thermotoga petrophila (strain ATCC BAA-488 / DSM 13995 / JCM 10881 / RKU-1).